The primary structure comprises 427 residues: 3-phosphoshikimate 1-carboxyvinyltransferase (427 aa).

K23, S24, and R28 together coordinate 3-phosphoshikimate. K23 contacts phosphoenolpyruvate. The phosphoenolpyruvate site is built by G97 and R125. Positions 170, 171, 172, 198, 314, 337, and 341 each coordinate 3-phosphoshikimate. Q172 serves as a coordination point for phosphoenolpyruvate. The active-site Proton acceptor is the D314. R345, R387, and K412 together coordinate phosphoenolpyruvate.

Belongs to the EPSP synthase family. In terms of assembly, monomer.

Its subcellular location is the cytoplasm. It carries out the reaction 3-phosphoshikimate + phosphoenolpyruvate = 5-O-(1-carboxyvinyl)-3-phosphoshikimate + phosphate. It participates in metabolic intermediate biosynthesis; chorismate biosynthesis; chorismate from D-erythrose 4-phosphate and phosphoenolpyruvate: step 6/7. Its function is as follows. Catalyzes the transfer of the enolpyruvyl moiety of phosphoenolpyruvate (PEP) to the 5-hydroxyl of shikimate-3-phosphate (S3P) to produce enolpyruvyl shikimate-3-phosphate and inorganic phosphate. The polypeptide is 3-phosphoshikimate 1-carboxyvinyltransferase (Buchnera aphidicola subsp. Baizongia pistaciae (strain Bp)).